The sequence spans 983 residues: Probable beta-galactosidase C (983 aa).

A signal peptide spans 1–23 (MRIFSFLFLLLLGILTGQGLVSG). Residues Y82, N127, A128, E129, and N187 each contribute to the substrate site. E188 acts as the Proton donor in catalysis. N-linked (GlcNAc...) asparagine glycosylation is present at N197. Residue Y251 participates in substrate binding. An intrachain disulfide couples C257 to C304. A glycan (N-linked (GlcNAc...) asparagine) is linked at N276. E287 acts as the Nucleophile in catalysis. Y353 contacts substrate. N391, N434, N466, N516, N601, N676, N714, N719, N758, and N804 each carry an N-linked (GlcNAc...) asparagine glycan.

This sequence belongs to the glycosyl hydrolase 35 family.

Its subcellular location is the secreted. It carries out the reaction Hydrolysis of terminal non-reducing beta-D-galactose residues in beta-D-galactosides.. Its function is as follows. Cleaves beta-linked terminal galactosyl residues from gangliosides, glycoproteins, and glycosaminoglycans. The protein is Probable beta-galactosidase C (lacC) of Aspergillus fumigatus (strain CBS 144.89 / FGSC A1163 / CEA10) (Neosartorya fumigata).